We begin with the raw amino-acid sequence, 246 residues long: Chanoclavine-I dehydrogenase easD (246 aa).

A signal peptide spans 1 to 20 (MASVSSKIFAITGGASGIGA). NADP(+) contacts are provided by I18, D66, R132, Y169, and K173. Y169 serves as the catalytic Proton donor. K173 (lowers pKa of active site Tyr) is an active-site residue.

The protein belongs to the short-chain dehydrogenases/reductases (SDR) family. As to quaternary structure, homotetramer.

It catalyses the reaction chanoclavine-I + NAD(+) = chanoclavine-I aldehyde + NADH + H(+). The protein operates within alkaloid biosynthesis; ergot alkaloid biosynthesis. Chanoclavine-I dehydrogenase; part of the gene cluster that mediates the biosynthesis of fungal ergot alkaloid. DmaW catalyzes the first step of ergot alkaloid biosynthesis by condensing dimethylallyl diphosphate (DMAP) and tryptophan to form 4-dimethylallyl-L-tryptophan. The second step is catalyzed by the methyltransferase easF that methylates 4-dimethylallyl-L-tryptophan in the presence of S-adenosyl-L-methionine, resulting in the formation of 4-dimethylallyl-L-abrine. The catalase easC and the FAD-dependent oxidoreductase easE then transform 4-dimethylallyl-L-abrine to chanoclavine-I which is further oxidized by easD in the presence of NAD(+), resulting in the formation of chanoclavine-I aldehyde. Chanoclavine-I aldehyde is the precursor of ergoamides and ergopeptines in Clavicipitaceae, and clavine-type alcaloids such as fumiclavine in Trichocomaceae. However, the metabolites downstream of chanoclavine-I aldehyde in Arthrodermataceae have not been identified yet. This chain is Chanoclavine-I dehydrogenase easD, found in Arthroderma benhamiae (strain ATCC MYA-4681 / CBS 112371) (Trichophyton mentagrophytes).